A 258-amino-acid polypeptide reads, in one-letter code: MLAIISPAKTLDFESAVKNFPVSQPHFTDYSEQLIEVCRKLSPQDLSSLMSISDKLAGLNAARFAEWTKIHNENNSRPALFAFKGDVYTGLDADSLSEDDVIFAQSHLRMLSGLYGLLKPLDLMQPYRLEMGTKLANPKGKDLYAFWGNVITQAVQQAIDEQGDNVLVNLASDEYYKSVKESQINAKIIKPVFLDNKNGKYKVISFYAKKARGLMCRYIIQHHLTEIEQLKEFDLGGYWFDSASSTETEFVFKRDINE.

It belongs to the UPF0246 family.

The chain is UPF0246 protein HI_0984 from Haemophilus influenzae (strain ATCC 51907 / DSM 11121 / KW20 / Rd).